We begin with the raw amino-acid sequence, 254 residues long: Tabinhibitin 6 (254 aa).

The first 22 residues, 1 to 22, serve as a signal peptide directing secretion; it reads MLPYWCPLLLAALVLQYATIDA. Positions 31 to 33 match the Cell attachment site motif; sequence RGD. The region spanning 66–210 is the SCP domain; sequence LSKINDVRDH…KARALLTCNF (145 aa).

This sequence belongs to the CRISP family. Expressed in salivary glands.

The protein localises to the secreted. In terms of biological role, inhibits platelet aggregation induced by all agonists tested (ADP, arachidonic acid, the thromboxane A2 analog U46619, thrombin, and snake venom snaclecs (TMVA that activates platelet through GPIB, and stejnulxin that specifically acts through GPVI (GP6))). May act by competing with fibrinogen for binding to glycoprotein IIb/IIIa (ITGA2B/ITGB3). This Tabanus yao (Horsefly) protein is Tabinhibitin 6.